Here is a 208-residue protein sequence, read N- to C-terminus: Imidazoleglycerol-phosphate dehydratase (208 aa).

This sequence belongs to the imidazoleglycerol-phosphate dehydratase family.

The protein resides in the cytoplasm. It catalyses the reaction D-erythro-1-(imidazol-4-yl)glycerol 3-phosphate = 3-(imidazol-4-yl)-2-oxopropyl phosphate + H2O. The protein operates within amino-acid biosynthesis; L-histidine biosynthesis; L-histidine from 5-phospho-alpha-D-ribose 1-diphosphate: step 6/9. This is Imidazoleglycerol-phosphate dehydratase from Mycobacterium sp. (strain JLS).